The primary structure comprises 322 residues: Malate dehydrogenase (322 aa).

NAD(+)-binding positions include Gly-10–Gly-15 and Asp-34. Arg-83 and Arg-89 together coordinate substrate. Residues Asn-96 and Ile-119 to Asn-121 each bind NAD(+). Substrate is bound by residues Asn-121 and Arg-152. The Proton acceptor role is filled by His-176.

Belongs to the LDH/MDH superfamily. MDH type 3 family.

The enzyme catalyses (S)-malate + NAD(+) = oxaloacetate + NADH + H(+). Functionally, catalyzes the reversible oxidation of malate to oxaloacetate. The protein is Malate dehydrogenase of Mesorhizobium japonicum (strain LMG 29417 / CECT 9101 / MAFF 303099) (Mesorhizobium loti (strain MAFF 303099)).